The following is a 97-amino-acid chain: ESAT-6-like protein EsxS (97 aa).

Belongs to the WXG100 family. CFP-10 subfamily. As to quaternary structure, forms a tight complex with EsxR. Exists in heterodimeric and heterotetrameric forms.

The protein localises to the secreted. In Mycobacterium tuberculosis (strain ATCC 25618 / H37Rv), this protein is ESAT-6-like protein EsxS.